A 452-amino-acid polypeptide reads, in one-letter code: Cell division protein FtsZ (452 aa).

GTP is bound by residues 24-28 (GAGSN), 111-113 (GTG), Glu-142, Arg-146, and Asp-190.

It belongs to the FtsZ family. Homodimer. Polymerizes to form a dynamic ring structure in a strictly GTP-dependent manner. Interacts directly with several other division proteins.

It localises to the cytoplasm. Essential cell division protein that forms a contractile ring structure (Z ring) at the future cell division site. The regulation of the ring assembly controls the timing and the location of cell division. One of the functions of the FtsZ ring is to recruit other cell division proteins to the septum to produce a new cell wall between the dividing cells. Binds GTP and shows GTPase activity. In Rickettsia typhi (strain ATCC VR-144 / Wilmington), this protein is Cell division protein FtsZ.